The sequence spans 351 residues: Calcium homeostasis modulator 1 (351 aa).

Over 1–20 the chain is Cytoplasmic; sequence MDKFRMMFQFLQSNQESFMN. The segment at 9–36 is central pore; the sequence is QFLQSNQESFMNGICGIMALASAQMYSS. Residues 21 to 36 form a helical membrane-spanning segment; that stretch reads GICGIMALASAQMYSS. Residues 37 to 48 are Extracellular-facing; sequence FEFSCPCMPEYN. 2 cysteine pairs are disulfide-bonded: C41–C126 and C43–C160. A helical membrane pass occupies residues 49 to 71; it reads YTYGIGLLIIPPIWFFLLGFVLN. The segment at 62–69 is phospholipid-binding; sequence WFFLLGFV. The Cytoplasmic portion of the chain corresponds to 72–98; that stretch reads NNVSVLAEEWKRPTGRRTKDPSVLRYM. Residues 99–124 traverse the membrane as a helical segment; it reads LCSITQRSLIAPAVWVSVTLMDGKSF. Residue C100 is the site of S-palmitoyl cysteine attachment. The interval 104-116 is phospholipid-binding; the sequence is QRSLIAPAVWVSV. At 125 to 177 the chain is on the extracellular side; it reads LCAFSINLDIEKFGNASLVIGMTETEKLKFLARIPCKDLFEDNEVRVAATRYI. N139 carries an N-linked (GlcNAc...) asparagine glycan. Residues 178 to 203 traverse the membrane as a helical segment; sequence KCISQACGWMFLLMMTFTAFLIRAIR. The segment at 189 to 199 is phospholipid-binding; that stretch reads LLMMTFTAFLI. At 204-351 the chain is on the cytoplasmic side; it reads PCFTQAAFLK…KEWAVYYSKV (148 aa). C205 is lipidated: S-palmitoyl cysteine. The segment at 259 to 281 is disordered; the sequence is HRHQSKDTSDAEEEEKQRSDEDK. Positions 263 to 281 are enriched in basic and acidic residues; it reads SKDTSDAEEEEKQRSDEDK.

The protein belongs to the CALHM family. As to quaternary structure, oligomerizes to form hexamers and octamers. Does not form gap junctions. Associates with CALHM3 as a pore-forming subunit in a hetero-hexameric channel complex. In terms of processing, N-glycosylated. Post-translationally, palmitoylated.

Its subcellular location is the cell membrane. It is found in the endoplasmic reticulum membrane. It localises to the basolateral cell membrane. The enzyme catalyses ATP(in) = ATP(out). It carries out the reaction Ca(2+)(in) = Ca(2+)(out). It catalyses the reaction Mg(2+)(in) = Mg(2+)(out). The catalysed reaction is Na(+)(in) = Na(+)(out). The enzyme catalyses K(+)(in) = K(+)(out). It carries out the reaction Li(+)(in) = Li(+)(out). It catalyses the reaction Rb(+)(in) = Rb(+)(out). The catalysed reaction is Cs(+)(in) = Cs(+)(out). The enzyme catalyses chloride(in) = chloride(out). Activated in response to membrane depolarization and low extracellular Ca(2+) concentration. Inhibited by ruthenium red. Pore-forming subunit of a voltage-gated ion channel. Has poor ion selectivity and forms a wide pore that mediates permeation of small ions including Ca(2+), Na(+), K(+) and Cl(-), as well as larger ions such as ATP(4-). This Oryzias latipes (Japanese rice fish) protein is Calcium homeostasis modulator 1.